We begin with the raw amino-acid sequence, 616 residues long: Dihydroxy-acid dehydratase (616 aa).

D81 contributes to the Mg(2+) binding site. C122 provides a ligand contact to [2Fe-2S] cluster. Mg(2+)-binding residues include D123 and K124. Position 124 is an N6-carboxylysine (K124). C195 contacts [2Fe-2S] cluster. E491 serves as a coordination point for Mg(2+). The Proton acceptor role is filled by S517.

The protein belongs to the IlvD/Edd family. As to quaternary structure, homodimer. The cofactor is [2Fe-2S] cluster. It depends on Mg(2+) as a cofactor.

It catalyses the reaction (2R)-2,3-dihydroxy-3-methylbutanoate = 3-methyl-2-oxobutanoate + H2O. The enzyme catalyses (2R,3R)-2,3-dihydroxy-3-methylpentanoate = (S)-3-methyl-2-oxopentanoate + H2O. It participates in amino-acid biosynthesis; L-isoleucine biosynthesis; L-isoleucine from 2-oxobutanoate: step 3/4. Its pathway is amino-acid biosynthesis; L-valine biosynthesis; L-valine from pyruvate: step 3/4. Functionally, functions in the biosynthesis of branched-chain amino acids. Catalyzes the dehydration of (2R,3R)-2,3-dihydroxy-3-methylpentanoate (2,3-dihydroxy-3-methylvalerate) into 2-oxo-3-methylpentanoate (2-oxo-3-methylvalerate) and of (2R)-2,3-dihydroxy-3-methylbutanoate (2,3-dihydroxyisovalerate) into 2-oxo-3-methylbutanoate (2-oxoisovalerate), the penultimate precursor to L-isoleucine and L-valine, respectively. The protein is Dihydroxy-acid dehydratase of Salmonella dublin (strain CT_02021853).